The following is a 179-amino-acid chain: Large ribosomal subunit protein uL5 (179 aa).

Belongs to the universal ribosomal protein uL5 family. Part of the 50S ribosomal subunit; part of the 5S rRNA/L5/L18/L25 subcomplex. Contacts the 5S rRNA and the P site tRNA. Forms a bridge to the 30S subunit in the 70S ribosome.

This is one of the proteins that bind and probably mediate the attachment of the 5S RNA into the large ribosomal subunit, where it forms part of the central protuberance. In the 70S ribosome it contacts protein S13 of the 30S subunit (bridge B1b), connecting the 2 subunits; this bridge is implicated in subunit movement. Contacts the P site tRNA; the 5S rRNA and some of its associated proteins might help stabilize positioning of ribosome-bound tRNAs. The protein is Large ribosomal subunit protein uL5 of Cellvibrio japonicus (strain Ueda107) (Pseudomonas fluorescens subsp. cellulosa).